A 634-amino-acid polypeptide reads, in one-letter code: Chaperone protein DnaK (634 aa).

At T199 the chain carries Phosphothreonine; by autocatalysis. Low complexity predominate over residues 601–618 (AAAGQAQAESGAGAQGNA). The interval 601–634 (AAAGQAQAESGAGAQGNAKPDDVVDAEFEEVDKK) is disordered. The segment covering 623–634 (VVDAEFEEVDKK) has biased composition (acidic residues).

The protein belongs to the heat shock protein 70 family.

Its function is as follows. Acts as a chaperone. This Acidithiobacillus ferrooxidans (strain ATCC 23270 / DSM 14882 / CIP 104768 / NCIMB 8455) (Ferrobacillus ferrooxidans (strain ATCC 23270)) protein is Chaperone protein DnaK.